A 593-amino-acid chain; its full sequence is MRSAARRGRAAPAARDSLPVLLFLCLLLKTCEPKTANAFKPNILLIMADDLGTGDLGCYGNNTLRTPNIDQLAEEGVRLTQHLAAAPLCTPSRAAFLTGRHSFRSGMDASNGYRALQWNAGSGGLPENETTFARILQQHGYATGLIGKWHQGVNCASRGDHCHHPLNHGFDYFYGMPFTLTNDCDPGRPPEVDAALRAQLWGYTQFLALGILTLAAGQTCGFFSVSARAVTGMAGVGCLFFISWYSSFGFVRRWNCILMRNHDVTEQPMVLEKTASLMLKEAVSYIERHKHGPFLLFLSLLHVHIPLVTTSAFLGKSQHGLYGDNVEEMDWLIGKVLNAIEDNGLKNSTFTYFTSDHGGHLEARDGHSQLGGWNGIYKGGKGMGGWEGGIRVPGIFHWPGVLPAGRVIGEPTSLMDVFPTVVQLVGGEVPQDRVIDGHSLVPLLQGAEARSAHEFLFHYCGQHLHAARWHQKDSGSVWKVHYTTPQFHPEGAGACYGRGVCPCSGEGVTHHRPPLLFDLSRDPSEARPLTPDSEPLYHAVIARVGAAVSEHRQTLSPVPQQFSMSNILWKPWLQPCCGHFPFCSCHEDGDGTP.

An N-terminal signal peptide occupies residues 1–33 (MRSAARRGRAAPAARDSLPVLLFLCLLLKTCEP). Ca(2+) contacts are provided by Asp49 and Asp50. The N-linked (GlcNAc...) asparagine glycan is linked to Asn61. Residue Cys89 coordinates Ca(2+). Cys89 acts as the Nucleophile in catalysis. Residue Cys89 is modified to 3-oxoalanine (Cys). An N-linked (GlcNAc...) asparagine glycan is attached at Asn128. Lys148 is a binding site for substrate. His150 is an active-site residue. Residue His304 coordinates substrate. An N-linked (GlcNAc...) asparagine glycan is attached at Asn347. 2 residues coordinate Ca(2+): Asp356 and His357. Lys381 provides a ligand contact to substrate.

The protein belongs to the sulfatase family. Ca(2+) is required as a cofactor. Post-translationally, the conversion to 3-oxoalanine (also known as C-formylglycine, FGly), of a serine or cysteine residue in prokaryotes and of a cysteine residue in eukaryotes, is critical for catalytic activity. In terms of tissue distribution, expressed in the pancreas, kidney, liver, lung, placenta, brain and heart.

It localises to the lysosome. The sequence is that of Arylsulfatase D (ARSD) from Homo sapiens (Human).